The primary structure comprises 93 residues: Putative pterin-4-alpha-carbinolamine dehydratase (93 aa).

The protein belongs to the pterin-4-alpha-carbinolamine dehydratase family.

It carries out the reaction (4aS,6R)-4a-hydroxy-L-erythro-5,6,7,8-tetrahydrobiopterin = (6R)-L-erythro-6,7-dihydrobiopterin + H2O. The chain is Putative pterin-4-alpha-carbinolamine dehydratase from Nostoc sp. (strain PCC 7120 / SAG 25.82 / UTEX 2576).